Consider the following 202-residue polypeptide: uncharacterized protein (202 aa).

An N-terminal signal peptide occupies residues 1-18; it reads MKNRLLILSLLVSVPAFA.

It to E.coli YebB.

This is an uncharacterized protein from Escherichia coli (strain K12).